Here is a 56-residue protein sequence, read N- to C-terminus: uncharacterized protein (56 aa).

This is an uncharacterized protein from Lepidoptera (butterflies and moths).